Consider the following 75-residue polypeptide: Porwaprin-d (75 aa).

Residues 1–24 (MSSGGLLLLLGLLTLWAELTPVSS) form the signal peptide. A WAP domain is found at 27–72 (RPKKPGLCPPRPQKPPCVRECKNDWRCPGEQKCCRYGCIYECRDPI). Cystine bridges form between Cys34/Cys60, Cys43/Cys64, Cys47/Cys59, and Cys53/Cys68.

The protein belongs to the venom waprin family. As to expression, expressed by the venom gland.

It localises to the secreted. In terms of biological role, damages membranes of susceptible bacteria. Has no hemolytic activity. Not toxic to mice. Does not inhibit the proteinases elastase and cathepsin G. This chain is Porwaprin-d, found in Pseudechis porphyriacus (Red-bellied black snake).